Here is a 1255-residue protein sequence, read N- to C-terminus: MFPFQPMYPMQPMPYRNPFAAPRRPWFPRTDPFLAMQVQELTRSMANLTFKQRREAPPEGPPAKKPKREAPQKQKGGGQGKKKKNQGKKKAKTGPPNPKAQNGNKKKTNKKPGKRQRMVMKLESDKTFPIMLEGKINGYACVVGGKLFRPMHVEGKIDNDVLAALKTKKASKYDLEYADVPQNMRADTFKYTHEKPQGYYSWHHGAVQYENGRFTVPKGVGAKGDSGRPILDNQGRVVAIVLGGVNEGSRTALSVVMWNEKGVTVKYTPENCEQWSLVTTMCLLANVTFPCAQPPICYDRKPAETLAMLSVNVDNPGYDELLEAAVKCPGRKRRSTEELFKEYKLTRPYMARCIRCAVGSCHSPIAIEAVKSDGHDGYVRLQTSSQYGLDSSGNLKGRTMRYDMHGTIEEIPLHQVSLHTSRPCHIVDGHGYFLLARCPAGDSITMEFKKDAVTHSCSVPYEVKFNPVGRELYTHPPEHGAEQACQVYAHDAQNRGAYVEMHLPGSEVDSSLVSLSGSSVTVTPPAGTSALVECECGGTKISETINTAKQFSQCTKKEQCRAYRLQNDKWVYNSDKLPKAAGATLKGKLHVPFLLADGKCTVPLAPEPMITFGFRSVSLKLHPKNPTYLTTRQLADEPHYTHELISEPVVRNFSVTEKGWEFVWGNHPPKRFWAQETAPGNPHGLPHEVITHYYHRYPMSTILGLSICAAIVTVSIAASTWLLCKSRVSCLTPYRLTPNARMPLCLAVLCCARTARAETTWESLDHLWNNNQQMFWIQLLIPLAALIVVTRLLRCVCCVVPFLVVAGAAGAGAYEHATTMPSQAGIPYNTIVNRAGYAPLPISITPTKIKLIPTVNLEYVTCHYKTGMDSPAIKCCGSQECTPTYRPDEQCKVFTGVYPFMWGGAYCFCDTENTQVSKAYVMKSDDCLADHAEAYKAHTASVQAFLNITVGEHSIVTTVYVNGETPVNFNGVKLTAGPLSTAWTPFDRKIVQYAGEIYNYDFPEYGAGQPGAFGDIQSRTVSSSDLYANTNLVLQRPKAGAIHVPYTQAPSGFEQWKKDKAPSLKFTAPFGCEIYTNPIRAENCAVGSIPLAFDIPDALFTRVSETPTLSAAECTLNECVYSSDFGGIATVKYSASKSGKCAVHVPSGTATLKEAAIELAEQGSATIHFSTANIHPEFRLQICTSYVTCKGDCHPPKDHIVTHPQYHAQTFTAAVSKTAWTWLTSLLGGSAVIIIIGLVLATIVAMYVLTNQKHN.

The tract at residues 1 to 33 (MFPFQPMYPMQPMPYRNPFAAPRRPWFPRTDPF) is necessary for nucleocapsid assembly and virus assembly. A host transcription inhibition region spans residues 33–68 (FLAMQVQELTRSMANLTFKQRREAPPEGPPAKKPKR). Residues 41–48 (LTRSMANL) carry the Supraphysiological nuclear export signal motif. The interval 44–119 (SMANLTFKQR…KKPGKRQRMV (76 aa)) is disordered. An N-linked (GlcNAc...) asparagine; by host glycan is attached at Asn47. Residues 64 to 68 (KKPKR) carry the Nuclear localization signal motif. A compositionally biased stretch (basic residues) spans 80–92 (GKKKKNQGKKKAK). Residues 91–127 (AKTGPPNPKAQNGNKKKTNKKPGKRQRMVMKLESDKT) form a binding to the viral RNA region. A phosphothreonine mark is found at Thr93 and Thr108. Over residues 104–118 (NKKKTNKKPGKRQRM) the composition is skewed to basic residues. The tract at residues 112–126 (PGKRQRMVMKLESDK) is ribosome-binding. Position 124 is a phosphoserine (Ser124). One can recognise a Peptidase S3 domain in the interval 126-275 (KTFPIMLEGK…KYTPENCEQW (150 aa)). Thr127 carries the phosphothreonine modification. His152 (charge relay system) is an active-site residue. Residues 168-173 (KKASKY) are interaction with spike glycoprotein E2. Active-site charge relay system residues include Asp174 and Ser226. Residues 260–264 (EKGVT) are interaction with spike glycoprotein E2. The segment at 276 to 287 (SLVTTMCLLANV) is functions as an uncleaved signal peptide for the precursor of protein E3/E2. Residues 276–701 (SLVTTMCLLA…HYYHRYPMST (426 aa)) are Extracellular-facing. Disulfide bonds link Cys282-Cys291, Cys353-Cys457, Cys356-Cys361, Cys424-Cys438, Cys485-Cys600, Cys534-Cys560, and Cys536-Cys554. An N-linked (GlcNAc...) asparagine; by host glycan is attached at Asn286. An N-linked (GlcNAc...) asparagine; by host glycan is attached at Asn652. A helical membrane pass occupies residues 702–722 (ILGLSICAAIVTVSIAASTWL). At 723–757 (LCKSRVSCLTPYRLTPNARMPLCLAVLCCARTARA) the chain is on the cytoplasmic side. The tract at residues 725-729 (KSRVS) is interaction with the capsid protein. S-palmitoyl cysteine; by host attachment occurs at residues Cys730, Cys750, and Cys751. The interval 730–750 (CLTPYRLTPNARMPLCLAVLC) is transient transmembrane before p62-6K protein processing. An intrachain disulfide couples Cys730 to Cys751. At 758–772 (ETTWESLDHLWNNNQ) the chain is on the extracellular side. Residues 773-793 (QMFWIQLLIPLAALIVVTRLL) traverse the membrane as a helical segment. Position 794 (Arg794) is a topological domain, cytoplasmic. The chain crosses the membrane as a helical span at residues 795–815 (CVCCVVPFLVVAGAAGAGAYE). Topologically, residues 816-1225 (HATTMPSQAG…SKTAWTWLTS (410 aa)) are extracellular. 4 disulfide bridges follow: Cys862/Cys927, Cys875/Cys907, Cys876/Cys909, and Cys881/Cys891. The interval 897–914 (VYPFMWGGAYCFCDTENT) is E1 fusion peptide loop. Asn947 and Asn1083 each carry an N-linked (GlcNAc...) asparagine; by host glycan. 4 cysteine pairs are disulfide-bonded: Cys1072/Cys1084, Cys1114/Cys1189, Cys1119/Cys1193, and Cys1141/Cys1183. A helical membrane pass occupies residues 1226–1246 (LLGGSAVIIIIGLVLATIVAM). Residues 1247 to 1255 (YVLTNQKHN) lie on the Cytoplasmic side of the membrane.

Homodimer. Homomultimer. Interacts with host karyopherin KPNA4; this interaction allows the nuclear import of the viral capsid protein. Interacts with spike glycoprotein E2. Interacts with host IRAK1; the interaction leads to inhibition of IRAK1-dependent signaling. Part of a tetrameric complex composed of host CRM1, host importin alpha/beta dimer and the viral capsid; this complex blocks the receptor-mediated transport through the nuclear pore. Interacts with host phosphatase PPP1CA; this interaction dephosphorylates the capsid protein, which increases its ability to bind to the viral genome. As to quaternary structure, the precursor of protein E3/E2 and E1 form a heterodimer shortly after synthesis. In terms of assembly, interacts with spike glycoprotein E2. The precursor of protein E3/E2 and E1 form a heterodimer shortly after synthesis. Processing of the precursor of protein E3/E2 into E2 and E3 results in a heterodimer of the spike glycoproteins E2 and E1. Spike at virion surface are constituted of three E2-E1 heterodimers. After target cell attachment and endocytosis, E1 change conformation to form homotrimers. Interacts with 6K protein. Interacts with host LDLRAD3; this interaction mediates viral entry to the host cell. Interacts with spike glycoprotein E1. Processing of the precursor of protein E3/E2 into E2 and E3 results in a heterodimer of the spike glycoproteins E2 and E1. Spike at virion surface are constituted of a trimer of E2-E1 heterodimers. Interacts with 6K protein. Interacts with host LDLRAD3; this interaction mediates viral entry to the host cell. As to quaternary structure, oligomer. Interacts with spike glycoprotein E1. Interacts with spike glycoprotein E2. Post-translationally, structural polyprotein: Specific enzymatic cleavages in vivo yield mature proteins. Capsid protein is auto-cleaved during polyprotein translation, unmasking a signal peptide at the N-terminus of the precursor of E3/E2. The remaining polyprotein is then targeted to the host endoplasmic reticulum, where host signal peptidase cleaves it into pE2, 6K and E1 proteins. pE2 is further processed to mature E3 and E2 by host furin in trans-Golgi vesicle. In terms of processing, phosphorylated on serine and threonine residues. Palmitoylated via thioester bonds. These palmitoylations may induce disruption of the C-terminus transmembrane. This would result in the reorientation of E2 C-terminus from lumenal to cytoplasmic side. Post-translationally, N-glycosylated. In terms of processing, palmitoylated via thioester bonds.

The protein localises to the virion. Its subcellular location is the host cytoplasm. The protein resides in the host cell membrane. It localises to the host nucleus. It is found in the virion membrane. The protein localises to the host Golgi apparatus. Its subcellular location is the host trans-Golgi network. The protein resides in the host endoplasmic reticulum. It carries out the reaction Autocatalytic release of the core protein from the N-terminus of the togavirus structural polyprotein by hydrolysis of a -Trp-|-Ser- bond.. Its function is as follows. Forms an icosahedral capsid with a T=4 symmetry composed of 240 copies of the capsid protein surrounded by a lipid membrane through which penetrate 80 spikes composed of trimers of E1-E2 heterodimers. The capsid protein binds to the viral RNA genome at a site adjacent to a ribosome binding site for viral genome translation following genome release. Possesses a protease activity that results in its autocatalytic cleavage from the nascent structural protein. Following its self-cleavage, the capsid protein transiently associates with ribosomes, and within several minutes the protein binds to viral RNA and rapidly assembles into icosahedric core particles. The resulting nucleocapsid eventually associates with the cytoplasmic domain of the spike glycoprotein E2 at the cell membrane, leading to budding and formation of mature virions. In case of infection, new virions attach to target cells and after clathrin-mediated endocytosis their membrane fuses with the host endosomal membrane. This leads to the release of the nucleocapsid into the cytoplasm, followed by an uncoating event necessary for the genomic RNA to become accessible. The uncoating might be triggered by the interaction of capsid proteins with ribosomes. Binding of ribosomes would release the genomic RNA since the same region is genomic RNA-binding and ribosome-binding. Specifically inhibits interleukin-1 receptor-associated kinase 1/IRAK1-dependent signaling during viral entry, representing a means by which the alphaviruses may evade innate immune detection and activation prior to viral gene expression. Inhibits host transcription. Forms a tetrameric complex with XPO1/CRM1 and the nuclear import receptor importin. This complex blocks the central channel of host nuclear pores thereby inhibiting the receptor-mediated nuclear transport and thus the host mRNA and rRNA transcription. The inhibition of transcription is linked to a cytopathic effect on the host cell. In terms of biological role, provides the signal sequence for the translocation of the precursor of protein E3/E2 to the host endoplasmic reticulum. Furin-cleaved E3 remains associated with spike glycoprotein E1 and mediates pH protection of the latter during the transport via the secretory pathway. After virion release from the host cell, the assembly protein E3 is gradually released in the extracellular space. Plays a role in viral attachment to target host cell, by binding to the cell receptor LDLRAD3. Synthesized as a p62 precursor which is processed by furin at the cell membrane just before virion budding, giving rise to E2-E1 heterodimer. The p62-E1 heterodimer is stable, whereas E2-E1 is unstable and dissociate at low pH. p62 is processed at the last step, presumably to avoid E1 fusion activation before its final export to cell surface. E2 C-terminus contains a transitory transmembrane that would be disrupted by palmitoylation, resulting in reorientation of the C-terminal tail from lumenal to cytoplasmic side. This step is critical since E2 C-terminus is involved in budding by interacting with capsid proteins. This release of E2 C-terminus in cytoplasm occurs lately in protein export, and precludes premature assembly of particles at the endoplasmic reticulum membrane. Functionally, acts as a viroporin that participates in virus glycoprotein processing and transport to the plasma membrane, cell permeabilization and budding of viral particles. Disrupts the calcium homeostasis of the cell, probably at the endoplasmic reticulum level. This leads to cytoplasmic calcium elevation. Because of its lipophilic properties, the 6K protein is postulated to influence the selection of lipids that interact with the transmembrane domains of the glycoproteins, which, in turn, affects the deformability of the bilayer required for the extreme curvature that occurs as budding proceeds. Present in low amount in virions, about 3% compared to viral glycoproteins. Its function is as follows. Class II viral fusion protein. Fusion activity is inactive as long as E1 is bound to E2 in mature virion. After virus attachment to cell receptor LDLRAD3 and endocytosis, acidification of the endosome induce dissociation of E1/E2 heterodimer and concomitant trimerization of the E1 subunits. This E1 trimer is fusion active, and promotes release of viral nucleocapsid in cytoplasm after endosome and viral membrane fusion. Efficient fusion requires the presence of cholesterol and sphingolipid in the target membrane. In Venezuelan equine encephalitis virus (strain 3880) (VEEV), this protein is Structural polyprotein.